We begin with the raw amino-acid sequence, 482 residues long: tRNA sulfurtransferase (482 aa).

A THUMP domain is found at 61–165; sequence LAIRDALTRI…DDRLLLIKGR (105 aa). Residues 183 to 184, lysine 265, glycine 287, and glutamine 296 contribute to the ATP site; that span reads LI. A disulfide bond links cysteine 344 and cysteine 456. Residues 404–482 enclose the Rhodanese domain; the sequence is FGPNDVILDI…GFNNVKVYRL (79 aa). The Cysteine persulfide intermediate role is filled by cysteine 456.

The protein belongs to the ThiI family.

The protein localises to the cytoplasm. It catalyses the reaction [ThiI sulfur-carrier protein]-S-sulfanyl-L-cysteine + a uridine in tRNA + 2 reduced [2Fe-2S]-[ferredoxin] + ATP + H(+) = [ThiI sulfur-carrier protein]-L-cysteine + a 4-thiouridine in tRNA + 2 oxidized [2Fe-2S]-[ferredoxin] + AMP + diphosphate. The enzyme catalyses [ThiS sulfur-carrier protein]-C-terminal Gly-Gly-AMP + S-sulfanyl-L-cysteinyl-[cysteine desulfurase] + AH2 = [ThiS sulfur-carrier protein]-C-terminal-Gly-aminoethanethioate + L-cysteinyl-[cysteine desulfurase] + A + AMP + 2 H(+). It functions in the pathway cofactor biosynthesis; thiamine diphosphate biosynthesis. Its function is as follows. Catalyzes the ATP-dependent transfer of a sulfur to tRNA to produce 4-thiouridine in position 8 of tRNAs, which functions as a near-UV photosensor. Also catalyzes the transfer of sulfur to the sulfur carrier protein ThiS, forming ThiS-thiocarboxylate. This is a step in the synthesis of thiazole, in the thiamine biosynthesis pathway. The sulfur is donated as persulfide by IscS. This is tRNA sulfurtransferase from Shigella boydii serotype 18 (strain CDC 3083-94 / BS512).